We begin with the raw amino-acid sequence, 226 residues long: MQIKVINETNKTVQIFQCAKVKHRALAWLCDVFLLAIVLVVIFLITQAFSDNRFLLFLVLSCSQTILWTVYFIFLPFFWDGKTLFRNLLKIKLFAFDKRFLRIMIHELFLWILLSVLFLVIASYFFINQNSSEALNFFTNLDKPNAIAITIRTITILISFLQLIFIGYFCFSSEKQALQEILSNTFMVQEKHTLKSKPTSLKTNNQPDPANLPGVIALDEVEKLIN.

4 helical membrane passes run 25–45, 54–74, 107–127, and 153–173; these read ALAW…IFLI, FLLF…YFIF, ELFL…YFFI, and TITI…CFSS.

It is found in the cell membrane. This is an uncharacterized protein from Mycoplasma genitalium (strain ATCC 33530 / DSM 19775 / NCTC 10195 / G37) (Mycoplasmoides genitalium).